Consider the following 377-residue polypeptide: Glutamate 5-kinase (377 aa).

Lys20 is a binding site for ATP. Substrate-binding residues include Ser60, Asp147, and Asn159. Residue 179 to 180 (TD) coordinates ATP. One can recognise a PUA domain in the interval 285-363 (AGRLVIDDGA…DKVYQVLGEA (79 aa)).

It belongs to the glutamate 5-kinase family.

It localises to the cytoplasm. It carries out the reaction L-glutamate + ATP = L-glutamyl 5-phosphate + ADP. The protein operates within amino-acid biosynthesis; L-proline biosynthesis; L-glutamate 5-semialdehyde from L-glutamate: step 1/2. Catalyzes the transfer of a phosphate group to glutamate to form L-glutamate 5-phosphate. The protein is Glutamate 5-kinase of Acinetobacter baumannii (strain SDF).